Reading from the N-terminus, the 247-residue chain is Anionic trypsin (247 aa).

The signal sequence occupies residues methionine 1–alanine 15. A propeptide spans phenylalanine 16–lysine 23 (activation peptide). Residues isoleucine 24–alanine 244 enclose the Peptidase S1 domain. 6 cysteine pairs are disulfide-bonded: cysteine 30–cysteine 160, cysteine 48–cysteine 64, cysteine 132–cysteine 233, cysteine 139–cysteine 206, cysteine 171–cysteine 185, and cysteine 196–cysteine 220. Catalysis depends on histidine 63, which acts as the Charge relay system. Ca(2+)-binding residues include glutamate 75, asparagine 77, valine 80, and glutamate 85. Aspartate 107 serves as the catalytic Charge relay system. Serine 200 (charge relay system) is an active-site residue.

The protein belongs to the peptidase S1 family. The cofactor is Ca(2+). Post-translationally, not sulfated on tyrosine residue(s).

It localises to the secreted. It is found in the extracellular space. The catalysed reaction is Preferential cleavage: Arg-|-Xaa, Lys-|-Xaa.. The sequence is that of Anionic trypsin from Bos taurus (Bovine).